An 875-amino-acid polypeptide reads, in one-letter code: Protein SEY1 (875 aa).

Over 1–749 (MVANGHFASN…KRSAIGGITQ (749 aa)) the chain is Cytoplasmic. The 259-residue stretch at 49 to 307 (GFNYHLISVF…IPADGFAVYA (259 aa)) folds into the GB1/RHD3-type G domain. A GTP-binding site is contributed by 59–66 (GSQSTGKS). Positions 482 to 506 (SNYQQELSLYQKDLERISGQLRRDE) form a coiled coil. The disordered stretch occupies residues 676–704 (LDKWIGHTPSSATPADEEDLTPIGGVDED). Residues 690 to 704 (ADEEDLTPIGGVDED) are compositionally biased toward acidic residues. A helical transmembrane segment spans residues 750 to 770 (VPLYFYGLLLALGWNEIMAVL). Topologically, residues 771–773 (RNP) are lumenal. Residues 774–794 (AYFFLLFVCAIGAYVTYQLNL) form a helical membrane-spanning segment. Residues 795-875 (WGPIIKMTEA…ADDDDVDDDF (81 aa)) lie on the Cytoplasmic side of the membrane. Residues 831-875 (MAMSGARNATEEHEMSNLNRKSGERGGQKYRGEDVADDDDVDDDF) form a disordered region. Over residues 839-864 (ATEEHEMSNLNRKSGERGGQKYRGED) the composition is skewed to basic and acidic residues. Residues 865-875 (VADDDDVDDDF) show a composition bias toward acidic residues.

This sequence belongs to the TRAFAC class dynamin-like GTPase superfamily. GB1/RHD3 GTPase family. RHD3 subfamily.

It is found in the endoplasmic reticulum membrane. Functionally, cooperates with the reticulon proteins and tubule-shaping DP1 family proteins to generate and maintain the structure of the tubular endoplasmic reticulum network. Has GTPase activity, which is required for its function in ER organization. This is Protein SEY1 from Ajellomyces dermatitidis (strain ER-3 / ATCC MYA-2586) (Blastomyces dermatitidis).